A 301-amino-acid chain; its full sequence is Homeobox protein knotted-1-like 1 (301 aa).

Residues 141-170 (CSGATSPPATTATHSDEMVGSSDEDQCSGE) are disordered. The segment covering 144 to 153 (ATSPPATTAT) has biased composition (low complexity). The 21-residue stretch at 188 to 208 (ELKEMLLKKYSGCLSRLRSEF) folds into the ELK domain. Residues 209-272 (LKKRKKGKLP…NQRKRHWKPS (64 aa)) constitute a DNA-binding region (homeobox; TALE-type).

The protein belongs to the TALE/KNOX homeobox family.

Its subcellular location is the nucleus. Its function is as follows. Probable transcription factor that may be involved in shoot formation during early embryogenesis. This Oryza sativa subsp. japonica (Rice) protein is Homeobox protein knotted-1-like 1 (OSH6).